A 423-amino-acid polypeptide reads, in one-letter code: UDP-N-acetylglucosamine 1-carboxyvinyltransferase 2 (423 aa).

Phosphoenolpyruvate is bound at residue 23–24; sequence KN. Arginine 93 is a binding site for UDP-N-acetyl-alpha-D-glucosamine. Residue cysteine 117 is the Proton donor of the active site. The residue at position 117 (cysteine 117) is a 2-(S-cysteinyl)pyruvic acid O-phosphothioketal. UDP-N-acetyl-alpha-D-glucosamine is bound by residues 122–126, aspartate 305, and isoleucine 327; that span reads RPIDQ.

It belongs to the EPSP synthase family. MurA subfamily.

It localises to the cytoplasm. The enzyme catalyses phosphoenolpyruvate + UDP-N-acetyl-alpha-D-glucosamine = UDP-N-acetyl-3-O-(1-carboxyvinyl)-alpha-D-glucosamine + phosphate. Its pathway is cell wall biogenesis; peptidoglycan biosynthesis. Cell wall formation. Adds enolpyruvyl to UDP-N-acetylglucosamine. The protein is UDP-N-acetylglucosamine 1-carboxyvinyltransferase 2 of Listeria monocytogenes serovar 1/2a (strain ATCC BAA-679 / EGD-e).